A 784-amino-acid polypeptide reads, in one-letter code: Repetin (784 aa).

Residues 1 to 91 (MAQLLNSILS…VQACYHKLDN (91 aa)) are S-100-like. 2 consecutive EF-hand domains span residues 13 to 48 (DVFH…LQRP) and 49 to 84 (NDPE…LVQA). Positions 32, 62, 64, 66, 68, and 73 each coordinate Ca(2+). Disordered regions lie at residues 92-221 (KSHG…QAKW), 282-584 (GCGQ…SHYI), 601-661 (TEGT…HQHK), and 677-784 (RDWQ…NHQR). Basic and acidic residues predominate over residues 124 to 201 (RHEEERQNSH…FSFDQSERQS (78 aa)). Composition is skewed to polar residues over residues 286–296 (TDRQGQSSHYG), 304–343 (SYHY…SSHY), 356–392 (DQTN…SHYG), 400–486 (SSHY…QSSH), 504–584 (GQGQ…SHYI), 610–646 (VEQS…QNGH), and 680–695 (QSCS…QTRQ). Composition is skewed to basic and acidic residues over residues 704-722 (WAEE…HESQ) and 729-784 (QDRR…NHQR).

Belongs to the S100-fused protein family. In terms of processing, potential substrate of transglutaminase. Some arginines are probably converted to citrullines by peptidylarginine deimidase. In terms of tissue distribution, expression is scattered in the normal epidermis but strong in the acrosyringium, the inner hair root sheath and in the filiform papilli of the tongue.

It is found in the secreted. Its subcellular location is the extracellular space. It localises to the extracellular matrix. Functionally, involved in the cornified cell envelope formation. Multifunctional epidermal matrix protein. Reversibly binds calcium. The polypeptide is Repetin (RPTN) (Homo sapiens (Human)).